The chain runs to 446 residues: Probable E3 ubiquitin-protein ligase XBOS31 (446 aa).

ANK repeat units lie at residues 46–75 (DRFT…DVDV), 79–108 (KKQT…NVLT), 113–142 (RART…QAQG), 160–189 (RGAT…IVSA), and 197–227 (PGST…RLQR). The RING-type zinc finger occupies 317–366 (CNICFEQACSMEVKECGHQMCAACTLAICCHSKPNPKTLLLHPPACPFCR). The disordered stretch occupies residues 376-401 (TTNSNKTNSRRRSRSRSSSFKGGLSS).

It catalyses the reaction S-ubiquitinyl-[E2 ubiquitin-conjugating enzyme]-L-cysteine + [acceptor protein]-L-lysine = [E2 ubiquitin-conjugating enzyme]-L-cysteine + N(6)-ubiquitinyl-[acceptor protein]-L-lysine.. It participates in protein modification; protein ubiquitination. The polypeptide is Probable E3 ubiquitin-protein ligase XBOS31 (XBOS31) (Oryza sativa subsp. japonica (Rice)).